We begin with the raw amino-acid sequence, 457 residues long: Oxygen-independent coproporphyrinogen III oxidase (457 aa).

The region spanning Arg47–Ala280 is the Radical SAM core domain. Tyr56 contributes to the S-adenosyl-L-methionine binding site. [4Fe-4S] cluster-binding residues include Cys62 and Cys66. Residue Phe68 coordinates S-adenosyl-L-methionine. Cys69 lines the [4Fe-4S] cluster pocket. Residues Gly112, Gly113–Thr114, Glu145, Gln172, Arg184, Asp209, Ala243, and Ile329 each bind S-adenosyl-L-methionine.

This sequence belongs to the anaerobic coproporphyrinogen-III oxidase family. In terms of assembly, monomer. Requires [4Fe-4S] cluster as cofactor.

The protein localises to the cytoplasm. The catalysed reaction is coproporphyrinogen III + 2 S-adenosyl-L-methionine = protoporphyrinogen IX + 2 5'-deoxyadenosine + 2 L-methionine + 2 CO2. The protein operates within porphyrin-containing compound metabolism; protoporphyrin-IX biosynthesis; protoporphyrinogen-IX from coproporphyrinogen-III (AdoMet route): step 1/1. Involved in the heme biosynthesis. Catalyzes the anaerobic oxidative decarboxylation of propionate groups of rings A and B of coproporphyrinogen III to yield the vinyl groups in protoporphyrinogen IX. In Salmonella typhi, this protein is Oxygen-independent coproporphyrinogen III oxidase (hemN).